Consider the following 210-residue polypeptide: Urease accessory protein UreF (210 aa).

Belongs to the UreF family. As to quaternary structure, ureD, UreF and UreG form a complex that acts as a GTP-hydrolysis-dependent molecular chaperone, activating the urease apoprotein by helping to assemble the nickel containing metallocenter of UreC. The UreE protein probably delivers the nickel.

Its subcellular location is the cytoplasm. Required for maturation of urease via the functional incorporation of the urease nickel metallocenter. This Cereibacter sphaeroides (strain ATCC 17023 / DSM 158 / JCM 6121 / CCUG 31486 / LMG 2827 / NBRC 12203 / NCIMB 8253 / ATH 2.4.1.) (Rhodobacter sphaeroides) protein is Urease accessory protein UreF.